The chain runs to 303 residues: Recombination-associated protein RdgC (303 aa).

This sequence belongs to the RdgC family.

The protein resides in the cytoplasm. It is found in the nucleoid. May be involved in recombination. The sequence is that of Recombination-associated protein RdgC from Yersinia pseudotuberculosis serotype O:1b (strain IP 31758).